Here is a 426-residue protein sequence, read N- to C-terminus: Bone morphogenetic protein 7 (426 aa).

An N-terminal signal peptide occupies residues 1-22 (MNALTVKRRLPVLLFLFHISLS). A propeptide spanning residues 23–282 (SISSNTILEN…TSDIHLRSVR (260 aa)) is cleaved from the precursor. 3 N-linked (GlcNAc...) asparagine glycosylation sites follow: Asn177, Asn307, and Asn367. 3 disulfide bridges follow: Cys325/Cys391, Cys354/Cys423, and Cys358/Cys425.

It belongs to the TGF-beta family. As to quaternary structure, homodimer; disulfide-linked. Interacts with twsg1.

It localises to the secreted. In terms of biological role, growth factor of the TGF-beta superfamily that plays important role in various biological processes, including embryogenesis, hematopoiesis, neurogenesis and skeletal morphogenesis. Initiates the canonical BMP signaling cascade by associating with type I receptor ACVR1 and type II receptor ACVR2A. Once all three components are bound together in a complex at the cell surface, ACVR2A phosphorylates and activates ACVR1. In turn, ACVR1 propagates signal by phosphorylating SMAD1/5/8 that travel to the nucleus and act as activators and repressors of transcription of target genes. This is Bone morphogenetic protein 7 (bmp7) from Xenopus laevis (African clawed frog).